A 197-amino-acid chain; its full sequence is 3-isopropylmalate dehydratase small subunit (197 aa).

This sequence belongs to the LeuD family. LeuD type 1 subfamily. As to quaternary structure, heterodimer of LeuC and LeuD.

It catalyses the reaction (2R,3S)-3-isopropylmalate = (2S)-2-isopropylmalate. It functions in the pathway amino-acid biosynthesis; L-leucine biosynthesis; L-leucine from 3-methyl-2-oxobutanoate: step 2/4. Its function is as follows. Catalyzes the isomerization between 2-isopropylmalate and 3-isopropylmalate, via the formation of 2-isopropylmaleate. This chain is 3-isopropylmalate dehydratase small subunit, found in Streptomyces griseus subsp. griseus (strain JCM 4626 / CBS 651.72 / NBRC 13350 / KCC S-0626 / ISP 5235).